A 942-amino-acid polypeptide reads, in one-letter code: Cilia- and flagella-associated protein 69 (942 aa).

Residues 1-16 (MSTAEASATTADAAEA) are compositionally biased toward low complexity. Residues 1-25 (MSTAEASATTADAAEAGGRTKTGSP) form a disordered region.

In terms of tissue distribution, expressed in ciliated olfactory sensory neurons (at protein level). Expressed in testis, specifically in sperm (at protein level).

The protein resides in the cell projection. It is found in the cilium. The protein localises to the flagellum. Cilium- and flagellum-associated protein. In the olfactory epithelium, regulates the speed of activation and termination of the odor response and thus contributes to the robustness of olfactory transduction pathways. Required for sperm flagellum assembly and stability. The polypeptide is Cilia- and flagella-associated protein 69 (Mus musculus (Mouse)).